Consider the following 1115-residue polypeptide: Iron-regulated protein FrpA (1115 aa).

Hemolysin-type calcium-binding repeat units lie at residues 755–772 (FGHNKNVSLYGNDGNDTL), 773–790 (IGGAGNDYLEGGSGSDTY), 901–918 (NGGLGDDYLYGADGNDLL), 919–936 (NGDAGNDSIYSGNGNDTL), 937–954 (DGGEGNDALYGYNGNDAL), 955–972 (NGGEGNDHLNGEDGNDTL), and 973–990 (IGGAGNDYLEGGSGSDTY).

The protein belongs to the RTX prokaryotic toxin (TC 1.C.11) family.

It is found in the cell outer membrane. Its subcellular location is the secreted. In terms of biological role, may participate in the pathogenesis of meningococcal disease. This chain is Iron-regulated protein FrpA (frpA), found in Neisseria meningitidis serogroup C.